A 785-amino-acid chain; its full sequence is 1-phosphatidylinositol 4,5-bisphosphate phosphodiesterase delta-3 (785 aa).

Residues 1-43 (MLCGGWKRSRRSPEESRVSAQVAAPLAFPPSPASSDSSTKRPG) form a disordered region. In terms of domain architecture, PH spans 65–168 (SRLLKIRSRT…WVRGLAKLRA (104 aa)). The substrate binding stretch occupies residues 69–97 (KIRSRTWHKERLYRLQEDGLSVWFQRRIP). Position 101 is a phosphoserine (Ser-101). EF-hand domains follow at residues 178–213 (RLDH…VNVD), 214–249 (MNDM…LLKR), and 246–281 (LLKR…QGED). Ca(2+)-binding residues include Asp-191, Asp-193, Asp-195, Lys-197, Glu-202, Asp-227, Ser-229, Asn-231, Arg-233, and Glu-238. A PI-PLC X-box domain is found at 333–478 (QDMGQPLAHY…LKGRILVKGK (146 aa)). His-348 is a catalytic residue. 3 residues coordinate Ca(2+): Asn-349, Glu-378, and Asp-380. The active site involves His-393. Glu-427 contacts Ca(2+). Substrate is bound by residues Lys-476 and Lys-478. A compositionally biased stretch (basic and acidic residues) spans 484–493 (RSEDGRILSD). Residues 484–517 (RSEDGRILSDREEEEEEEEEAEEALEAAEQRSRA) form a disordered region. The residue at position 492 (Ser-492) is a Phosphoserine. Residues 494 to 509 (REEEEEEEEEAEEALE) show a composition bias toward acidic residues. Residues 524–640 (LSALAVYCCA…GYVLKPAYLR (117 aa)) form the PI-PLC Y-box domain. Substrate is bound at residue Ser-553. Ser-569 is subject to Phosphoserine. Arg-580 is a binding site for substrate. The 130-residue stretch at 636–765 (PAYLRQLNTT…QGYRHIHLLS (130 aa)) folds into the C2 domain. Ca(2+) is bound by residues Ile-679, Asp-681, Asn-705, Asp-734, Tyr-735, and Asp-736.

Ca(2+) serves as cofactor. As to expression, expressed in cerebellum and cerebral cortex.

Its subcellular location is the membrane. The protein resides in the cytoplasm. The protein localises to the cleavage furrow. It catalyses the reaction a 1,2-diacyl-sn-glycero-3-phospho-(1D-myo-inositol-4,5-bisphosphate) + H2O = 1D-myo-inositol 1,4,5-trisphosphate + a 1,2-diacyl-sn-glycerol + H(+). With respect to regulation, strongly activated by phosphatidic acid. Inhibited by phosphatidylethanolamine (PtdEtn), phosphatidylcholine (PtdCho), sphingomyelin and phosphatidylserine (PtdSer). Its function is as follows. Hydrolyzes the phosphatidylinositol 4,5-bisphosphate (PIP2) to generate 2 second messenger molecules diacylglycerol (DAG) and inositol 1,4,5-trisphosphate (IP3). DAG mediates the activation of protein kinase C (PKC), while IP3 releases Ca(2+) from intracellular stores. Essential for trophoblast and placental development. May participate in cytokinesis by hydrolyzing PIP2 at the cleavage furrow. Regulates neurite outgrowth through the inhibition of RhoA/Rho kinase signaling. This is 1-phosphatidylinositol 4,5-bisphosphate phosphodiesterase delta-3 from Mus musculus (Mouse).